Consider the following 233-residue polypeptide: Protein Mis18-alpha (233 aa).

Residues serine 36, serine 39, and serine 40 each carry the phosphoserine modification. Positions 80-178 (PLVFLCSGCR…NVEAVESYVL (99 aa)) constitute a Mis18 domain. 4 residues coordinate Zn(2+): cysteine 85, cysteine 88, cysteine 141, and cysteine 144. Lysine 162 participates in a covalent cross-link: Glycyl lysine isopeptide (Lys-Gly) (interchain with G-Cter in SUMO2). Serine 233 bears the Phosphoserine mark.

This sequence belongs to the mis18 family. In terms of assembly, homodimer, and heterodimer with OIP5/MIS18B. Identified in a complex containing MIS18A, OIP5/MIS18B, MIS18BP1, RBBP7 and RBBP4.

It is found in the nucleus. It localises to the chromosome. The protein localises to the centromere. Required for recruitment of CENPA to centromeres and normal chromosome segregation during mitosis. In Plecturocebus moloch (Dusky titi monkey), this protein is Protein Mis18-alpha (MIS18A).